A 67-amino-acid polypeptide reads, in one-letter code: Large ribosomal subunit protein bL35 (67 aa).

It belongs to the bacterial ribosomal protein bL35 family.

This is Large ribosomal subunit protein bL35 from Dehalococcoides mccartyi (strain ATCC BAA-2100 / JCM 16839 / KCTC 5957 / BAV1).